Consider the following 162-residue polypeptide: Ciliary microtubule inner protein 5 (162 aa).

The interval 1 to 44 is disordered; sequence MGSHPTPGLQRTTSAGYRLPPTRPPASVSPAARGGPMASRGLAG.

The protein resides in the cell projection. Its subcellular location is the cilium. The sequence is that of Ciliary microtubule inner protein 5 from Homo sapiens (Human).